The primary structure comprises 212 residues: Large ribosomal subunit protein uL3 (212 aa).

The interval 136–155 (THGNSLSHRSNGSIGQNQTP) is disordered. Residue Q153 is modified to N5-methylglutamine.

It belongs to the universal ribosomal protein uL3 family. Part of the 50S ribosomal subunit. Forms a cluster with proteins L14 and L19. In terms of processing, methylated by PrmB.

Functionally, one of the primary rRNA binding proteins, it binds directly near the 3'-end of the 23S rRNA, where it nucleates assembly of the 50S subunit. This is Large ribosomal subunit protein uL3 from Shewanella oneidensis (strain ATCC 700550 / JCM 31522 / CIP 106686 / LMG 19005 / NCIMB 14063 / MR-1).